Here is a 330-residue protein sequence, read N- to C-terminus: GMP reductase (330 aa).

The active-site Thioimidate intermediate is Cys-180. 209-232 (LIADGGIRHNGDIAKSVRFGASMV) serves as a coordination point for NADP(+).

Belongs to the IMPDH/GMPR family. GuaC type 2 subfamily.

The catalysed reaction is IMP + NH4(+) + NADP(+) = GMP + NADPH + 2 H(+). Catalyzes the irreversible NADPH-dependent deamination of GMP to IMP. It functions in the conversion of nucleobase, nucleoside and nucleotide derivatives of G to A nucleotides, and in maintaining the intracellular balance of A and G nucleotides. The protein is GMP reductase of Lactobacillus acidophilus (strain ATCC 700396 / NCK56 / N2 / NCFM).